The chain runs to 199 residues: Pneumococcal vaccine antigen A homolog (199 aa).

It is found in the cell surface. This is Pneumococcal vaccine antigen A homolog (pvaA) from Streptococcus pyogenes serotype M18 (strain MGAS8232).